Reading from the N-terminus, the 129-residue chain is Urease subunit beta (129 aa).

The protein belongs to the urease beta subunit family. As to quaternary structure, heterotrimer of UreA (gamma), UreB (beta) and UreC (alpha) subunits. Three heterotrimers associate to form the active enzyme.

Its subcellular location is the cytoplasm. It carries out the reaction urea + 2 H2O + H(+) = hydrogencarbonate + 2 NH4(+). It functions in the pathway nitrogen metabolism; urea degradation; CO(2) and NH(3) from urea (urease route): step 1/1. This chain is Urease subunit beta, found in Photorhabdus laumondii subsp. laumondii (strain DSM 15139 / CIP 105565 / TT01) (Photorhabdus luminescens subsp. laumondii).